A 1803-amino-acid chain; its full sequence is Pyruvate dehydrogenase [NADP(+)], mitochondrial (1803 aa).

A mitochondrion-targeting transit peptide spans 1-37; the sequence is MKQSVRPIISNVLRKEVALYSTIIGQDKGKEPTGRTY. 2 consecutive 4Fe-4S ferredoxin-type domains span residues 747-776 and 802-831; these read FIPQ…PFVL and FRIQ…MTDA. The [4Fe-4S] cluster site is built by Cys-756, Cys-759, Cys-762, Cys-766, Cys-811, Cys-814, Cys-817, and Cys-821. In terms of domain architecture, Flavodoxin-like spans 1248–1391; that stretch reads VTILYGSETG…GFNNWIPSVW (144 aa). The FAD-binding FR-type domain maps to 1425-1650; sequence KSTPVLSITG…IHPTAMEFPD (226 aa). FAD is bound by residues 1458-1469 and 1585-1595; these read YQVGDSLGVFPE and IKPRYYSISSA.

The protein in the N-terminal section; belongs to the pyruvate:ferredoxin/flavodoxin oxidoreductase family. As to quaternary structure, homodimer. FAD serves as cofactor. FMN is required as a cofactor. The cofactor is thiamine diphosphate. Requires iron-sulfur cluster as cofactor.

The protein resides in the mitochondrion. The catalysed reaction is pyruvate + NADP(+) + CoA = acetyl-CoA + CO2 + NADPH. In terms of biological role, pyruvate dehydrogenase [NADP(+)] is one of three enzymes participating in respiratory metabolism. The enzyme is also active with 2-oxobutyrate and oxaloacetate. The enzyme is oxygen sensitive. The sequence is that of Pyruvate dehydrogenase [NADP(+)], mitochondrial (PNO) from Euglena gracilis.